Here is a 644-residue protein sequence, read N- to C-terminus: Sodium/hydrogen exchanger 9 (644 aa).

The Lumenal segment spans residues 1-20; that stretch reads MERQRRFMSEKDEYQFQHQG. A helical transmembrane segment spans residues 21–41; it reads AVELLVFNFLLILTILTIWLF. The Cytoplasmic segment spans residues 42-45; it reads KNHR. A helical transmembrane segment spans residues 46–66; sequence FRFLHETGGAMVYGLIMGLIL. Over 67–126 the chain is Lumenal; the sequence is RYATAPTDIESGTVYDCGKLAFSPSTLLINITDQVYEYKYKREISQHNINPHLGNAILEK. Residues 127–147 form a helical membrane-spanning segment; it reads MTFDPEIFFNVLLPPIIFHAG. The Cytoplasmic portion of the chain corresponds to 148–164; that stretch reads YSLKKRHFFQNLGSILT. A helical transmembrane segment spans residues 165 to 185; it reads YAFLGTAISCIVIGLIMYGFV. The Lumenal segment spans residues 186 to 203; it reads KAMVYAGQLKNGDFHFTD. The chain crosses the membrane as a helical span at residues 204–224; that stretch reads CLFFGSLMSATDPVTVLAIFH. The Cytoplasmic segment spans residues 225-235; sequence ELHVDPDLYTL. The chain crosses the membrane as a helical span at residues 236–256; sequence LFGESVLNDAVAIVLTYSISI. Residues 257–277 lie on the Lumenal side of the membrane; the sequence is YSPKENPNAFDAAAFFQSVGN. Residues 278 to 298 traverse the membrane as a helical segment; it reads FLGIFAGSFAMGSAYAVVTAL. Topologically, residues 299–301 are cytoplasmic; it reads LTK. The next 2 helical transmembrane spans lie at 302 to 322 and 323 to 343; these read FTKLCEFPMLETGLFFLLSWS and AFLSAEAAGLTGIVAVLFCGV. The Cytoplasmic portion of the chain corresponds to 344–364; sequence TQAHYTYNNLSLDSKMRTKQL. The helical transmembrane segment at 365 to 385 threads the bilayer; it reads FEFMNFLAENVIFCYMGLALF. Thr386 is a topological domain (lumenal). A helical transmembrane segment spans residues 387-407; sequence FQNHIFNALFILGAFLAIFVA. The Cytoplasmic portion of the chain corresponds to 408-429; the sequence is RACNIYPLSFLLNLGRKHKIPW. The helical transmembrane segment at 430-450 threads the bilayer; sequence NFQHMMMFSGLRGAIAFALAI. Residues 451 to 465 are Lumenal-facing; sequence RDTESQPKQMMFSTT. A helical transmembrane segment spans residues 466-486; sequence LLLVFFTVWVFGGGTTPMLTW. Topologically, residues 487–644 are cytoplasmic; it reads LQIRVGVDLD…EQTPGQSQLN (158 aa). Residues 593 to 622 are disordered; sequence QAASPCSPPTRLGLDQKAAPQTPGKENIYE.

It belongs to the monovalent cation:proton antiporter 1 (CPA1) transporter (TC 2.A.36) family. Homodimer; phosphatidylinositol-4,5-bisphosphate (PIP2) and phosphatidylinositol 3,4,5-trisphosphate (PIP3) could be involved in the dimer stabilization. Interacts (via the C-terminus) with RACK1. Interacts with CHP1.

The protein resides in the late endosome membrane. It localises to the early endosome membrane. Its subcellular location is the recycling endosome membrane. It is found in the cell membrane. The protein localises to the cytoplasmic vesicle. The protein resides in the phagosome membrane. It catalyses the reaction Na(+)(in) + H(+)(out) = Na(+)(out) + H(+)(in). The enzyme catalyses K(+)(in) + H(+)(out) = K(+)(out) + H(+)(in). Endosomal Na(+), K(+)/H(+) antiporter. Mediates the electroneutral exchange of endosomal luminal H(+) for a cytosolic Na(+) or K(+). By facilitating proton efflux, SLC9A9 counteracts the acidity generated by vacuolar (V)-ATPase, thereby limiting luminal acidification. Regulates organellar pH and consequently, endosome maturation and endocytic trafficking of plasma membrane receptors and neurotransporters. Promotes the recycling of transferrin receptors back to the cell surface to facilitate additional iron uptake in the brain. Regulates synaptic transmission by regulating the luminal pH of axonal endosomes. Regulates phagosome lumenal pH, thus affecting phagosome maturation, and consequently, microbicidal activity in macrophages. Can also be active at the cell surface of specialized cells, e.g., in the inner ear hair bundles uses the high K(+) of the endolymph to regulate intracelular pH. The protein is Sodium/hydrogen exchanger 9 (SLC9A9) of Equus caballus (Horse).